A 251-amino-acid polypeptide reads, in one-letter code: Pyridoxine 5'-phosphate synthase (251 aa).

Residues asparagine 8 and arginine 19 each contribute to the 3-amino-2-oxopropyl phosphate site. Histidine 44 acts as the Proton acceptor in catalysis. 1-deoxy-D-xylulose 5-phosphate is bound by residues arginine 46 and histidine 51. Residue glutamate 76 is the Proton acceptor of the active site. Threonine 106 contributes to the 1-deoxy-D-xylulose 5-phosphate binding site. The active-site Proton donor is histidine 200. 3-amino-2-oxopropyl phosphate-binding positions include aspartate 201 and 223–224 (GH).

It belongs to the PNP synthase family. As to quaternary structure, homooctamer; tetramer of dimers.

The protein localises to the cytoplasm. It catalyses the reaction 3-amino-2-oxopropyl phosphate + 1-deoxy-D-xylulose 5-phosphate = pyridoxine 5'-phosphate + phosphate + 2 H2O + H(+). The protein operates within cofactor biosynthesis; pyridoxine 5'-phosphate biosynthesis; pyridoxine 5'-phosphate from D-erythrose 4-phosphate: step 5/5. Its function is as follows. Catalyzes the complicated ring closure reaction between the two acyclic compounds 1-deoxy-D-xylulose-5-phosphate (DXP) and 3-amino-2-oxopropyl phosphate (1-amino-acetone-3-phosphate or AAP) to form pyridoxine 5'-phosphate (PNP) and inorganic phosphate. The chain is Pyridoxine 5'-phosphate synthase from Agrobacterium fabrum (strain C58 / ATCC 33970) (Agrobacterium tumefaciens (strain C58)).